A 447-amino-acid chain; its full sequence is Selenide, water dikinase 3 (447 aa).

Selenocysteine 50 is a catalytic residue. A non-standard amino acid (selenocysteine) is located at residue selenocysteine 50. Residues lysine 53, 103-105 (GMD), aspartate 123, aspartate 146, and 197-200 (GGQT) contribute to the ATP site. Position 105 (aspartate 105) interacts with Mg(2+). Residue aspartate 146 participates in Mg(2+) binding. Residue aspartate 301 coordinates Mg(2+).

The protein belongs to the selenophosphate synthase 1 family. Homodimer. Requires Mg(2+) as cofactor. In the embryo, expressed in retina, olfactory vesicles, tectum, pronephros ducts and myotomes at 24 hours post-fertilization and in retina, tectum, liver and intestinal bulb 3 days after fertilization.

The catalysed reaction is hydrogenselenide + ATP + H2O = selenophosphate + AMP + phosphate + 2 H(+). Synthesizes selenophosphate from selenide and ATP. This chain is Selenide, water dikinase 3, found in Danio rerio (Zebrafish).